A 364-amino-acid chain; its full sequence is CCA-adding enzyme (364 aa).

Residues G19 and R22 each contribute to the ATP site. Residues G19 and R22 each contribute to the CTP site. Mg(2+) is bound by residues D32 and D34. Residues R102, R148, and R151 each contribute to the ATP site. Residues R102, R148, and R151 each coordinate CTP.

This sequence belongs to the tRNA nucleotidyltransferase/poly(A) polymerase family. Bacterial CCA-adding enzyme type 2 subfamily. The cofactor is Mg(2+).

The catalysed reaction is a tRNA precursor + 2 CTP + ATP = a tRNA with a 3' CCA end + 3 diphosphate. The enzyme catalyses a tRNA with a 3' CCA end + 2 CTP + ATP = a tRNA with a 3' CCACCA end + 3 diphosphate. Functionally, catalyzes the addition and repair of the essential 3'-terminal CCA sequence in tRNAs without using a nucleic acid template. Adds these three nucleotides in the order of C, C, and A to the tRNA nucleotide-73, using CTP and ATP as substrates and producing inorganic pyrophosphate. tRNA 3'-terminal CCA addition is required both for tRNA processing and repair. Also involved in tRNA surveillance by mediating tandem CCA addition to generate a CCACCA at the 3' terminus of unstable tRNAs. While stable tRNAs receive only 3'-terminal CCA, unstable tRNAs are marked with CCACCA and rapidly degraded. This is CCA-adding enzyme from Bordetella bronchiseptica (strain ATCC BAA-588 / NCTC 13252 / RB50) (Alcaligenes bronchisepticus).